Reading from the N-terminus, the 510-residue chain is Probable cytochrome P450 517A2 (510 aa).

Residues 1 to 21 form a helical membrane-spanning segment; the sequence is MRILIIIILIIIVFLVKDTIK. C450 is a heme binding site.

It belongs to the cytochrome P450 family. It depends on heme as a cofactor.

The protein localises to the membrane. This is Probable cytochrome P450 517A2 (cyp517A2) from Dictyostelium discoideum (Social amoeba).